Here is a 177-residue protein sequence, read N- to C-terminus: Embryogenesis-like protein (177 aa).

Positions 98–118 (VDEINLKFAEAREEIEMAMDA) form a coiled coil.

As to quaternary structure, interacts with HAG1/GCN5. As to expression, expressed in flowers, leaves, stems and siliques.

The protein localises to the nucleus. In terms of biological role, activates gene expression by recruiting HAG1/GCN5 and triggering subsequent histone H3 acetylation of target genes promoters. This is Embryogenesis-like protein from Arabidopsis thaliana (Mouse-ear cress).